The sequence spans 613 residues: Threonine--tRNA ligase (613 aa).

The segment at 1-147 is editing domain; it reads MRLLLIHARS…TITPQESAPQ (147 aa). Catalytic regions lie at residues 199-495 and 200-495; these read PRYI…PALP and RYID…PALP. 3 residues coordinate Zn(2+): cysteine 292, histidine 343, and histidine 464.

Belongs to the class-II aminoacyl-tRNA synthetase family. As to quaternary structure, homodimer. The cofactor is Zn(2+).

Its subcellular location is the cytoplasm. The catalysed reaction is tRNA(Thr) + L-threonine + ATP = L-threonyl-tRNA(Thr) + AMP + diphosphate + H(+). Functionally, catalyzes the attachment of threonine to tRNA(Thr) in a two-step reaction: L-threonine is first activated by ATP to form Thr-AMP and then transferred to the acceptor end of tRNA(Thr). Also edits incorrectly charged L-seryl-tRNA(Thr). This chain is Threonine--tRNA ligase, found in Caldivirga maquilingensis (strain ATCC 700844 / DSM 13496 / JCM 10307 / IC-167).